The chain runs to 209 residues: Uracil phosphoribosyltransferase (209 aa).

5-phospho-alpha-D-ribose 1-diphosphate is bound by residues Arg-79, Arg-104, and 131 to 139 (DPMLATGGS). Residues Ile-194 and 199-201 (GDA) contribute to the uracil site. Asp-200 is a 5-phospho-alpha-D-ribose 1-diphosphate binding site.

It belongs to the UPRTase family. Requires Mg(2+) as cofactor.

It catalyses the reaction UMP + diphosphate = 5-phospho-alpha-D-ribose 1-diphosphate + uracil. Its pathway is pyrimidine metabolism; UMP biosynthesis via salvage pathway; UMP from uracil: step 1/1. With respect to regulation, allosterically activated by GTP. In terms of biological role, catalyzes the conversion of uracil and 5-phospho-alpha-D-ribose 1-diphosphate (PRPP) to UMP and diphosphate. This Clostridium kluyveri (strain NBRC 12016) protein is Uracil phosphoribosyltransferase.